The following is a 435-amino-acid chain: Trigger factor (435 aa).

In terms of domain architecture, PPIase FKBP-type spans 163-248; that stretch reads GDFVTFDFKG…IKEIKVKELP (86 aa).

The protein belongs to the FKBP-type PPIase family. Tig subfamily.

It is found in the cytoplasm. It carries out the reaction [protein]-peptidylproline (omega=180) = [protein]-peptidylproline (omega=0). Involved in protein export. Acts as a chaperone by maintaining the newly synthesized protein in an open conformation. Functions as a peptidyl-prolyl cis-trans isomerase. The polypeptide is Trigger factor (Citrifermentans bemidjiense (strain ATCC BAA-1014 / DSM 16622 / JCM 12645 / Bem) (Geobacter bemidjiensis)).